A 72-amino-acid chain; its full sequence is Small ribosomal subunit protein bS18 (72 aa).

The protein belongs to the bacterial ribosomal protein bS18 family. As to quaternary structure, part of the 30S ribosomal subunit. Forms a tight heterodimer with protein bS6.

Functionally, binds as a heterodimer with protein bS6 to the central domain of the 16S rRNA, where it helps stabilize the platform of the 30S subunit. This Aquifex aeolicus (strain VF5) protein is Small ribosomal subunit protein bS18.